The sequence spans 426 residues: 3-phosphoshikimate 1-carboxyvinyltransferase (426 aa).

Residues K22, S23, and R27 each contribute to the 3-phosphoshikimate site. K22 lines the phosphoenolpyruvate pocket. 2 residues coordinate phosphoenolpyruvate: G96 and R124. 3-phosphoshikimate-binding residues include S170, S171, Q172, S198, D314, N337, and K341. Q172 is a phosphoenolpyruvate binding site. The active-site Proton acceptor is the D314. Phosphoenolpyruvate-binding residues include R345, R387, and K412.

The protein belongs to the EPSP synthase family. Monomer.

It localises to the cytoplasm. The catalysed reaction is 3-phosphoshikimate + phosphoenolpyruvate = 5-O-(1-carboxyvinyl)-3-phosphoshikimate + phosphate. Its pathway is metabolic intermediate biosynthesis; chorismate biosynthesis; chorismate from D-erythrose 4-phosphate and phosphoenolpyruvate: step 6/7. In terms of biological role, catalyzes the transfer of the enolpyruvyl moiety of phosphoenolpyruvate (PEP) to the 5-hydroxyl of shikimate-3-phosphate (S3P) to produce enolpyruvyl shikimate-3-phosphate and inorganic phosphate. This is 3-phosphoshikimate 1-carboxyvinyltransferase from Shewanella baltica (strain OS195).